The primary structure comprises 24 residues: Lectin (24 aa).

Belongs to the leguminous lectin family. In terms of assembly, homotetramer.

Its function is as follows. Agglutinates erythrocytes of blood group A. Binds in decreasing order of affinity: N-acetyl-D-galactosamine, D-galactose, and D-galactosamine. This Crotalaria pallida (Smooth rattlebox) protein is Lectin.